The chain runs to 241 residues: MRHTRFHPIKLAWITAVVAGLMVGVATPADAEPGQWDPTLPALVSAGAPGDPLAVANASLQATAQATQTTLDLGRQFLGGLGINLGGPAASAPSAATTGASRIPRANARQAVEYVIRRAGSQMGVPYSWGGGSLQGPSKGVDSGANTVGFDCSGLVRYAFAGVGVLIPRFSGDQYNAGRHVPPAEAKRGDLIFYGPGGGQHVTLYLGNGQMLEASGSAGKVTVSPVRKAGMTPFVTRIIEY.

The signal sequence occupies residues 1 to 31 (MRHTRFHPIKLAWITAVVAGLMVGVATPADA). Residues 109–241 (RQAVEYVIRR…TPFVTRIIEY (133 aa)) enclose the NlpC/P60 domain. C152 serves as the catalytic Nucleophile. H201 serves as the catalytic Proton acceptor. E213 is an active-site residue.

The protein belongs to the peptidase C40 family. In terms of assembly, monomer.

Peptidoglycan endopeptidase that cleaves the bond between D-glutamate and meso-diaminopimelate. Binds high-molecular weight peptidoglycan, but does not degrade it. Required for normal separation of daughter cells after cell division and cell wall integrity. Required for host cell invasion. This chain is Peptidoglycan endopeptidase RipB (ripB), found in Mycobacterium tuberculosis (strain CDC 1551 / Oshkosh).